Consider the following 151-residue polypeptide: Small ribosomal subunit protein uS15 (151 aa).

The protein belongs to the universal ribosomal protein uS15 family.

The protein is Small ribosomal subunit protein uS15 (RpS13) of Spodoptera frugiperda (Fall armyworm).